The sequence spans 148 residues: Endoribonuclease YbeY (148 aa).

Residues His113, His117, and His123 each coordinate Zn(2+).

This sequence belongs to the endoribonuclease YbeY family. Zn(2+) serves as cofactor.

The protein resides in the cytoplasm. Its function is as follows. Single strand-specific metallo-endoribonuclease involved in late-stage 70S ribosome quality control and in maturation of the 3' terminus of the 16S rRNA. The sequence is that of Endoribonuclease YbeY from Borrelia recurrentis (strain A1).